The sequence spans 485 residues: Velvet complex subunit B (485 aa).

Residues 33–459 enclose the Velvet domain; the sequence is GRKHYSLEVV…GNQGQKLPLA (427 aa). Positions 107 to 353 are disordered; the sequence is VLHPSSVDRH…PPPPRHTYTR (247 aa). 4 stretches are compositionally biased toward polar residues: residues 134–155, 234–243, 267–304, and 326–341; these read APQS…TLSQ, RSPSSSTSDH, SISS…SPHS, and THSQ…QHVS.

It belongs to the velvet family. VelB subfamily. Component of the heterotrimeric velvet complex composed of laeA, veA and velB; VeA acting as a bridging protein between laeA and velB. Forms a heterodimeric complex with vosA; the formation of the velB-vosA complex is light-dependent.

It is found in the nucleus. The protein resides in the cytoplasm. Its function is as follows. Component of the velvet transcription factor complex that controls sexual/asexual developmental ratio in response to light, promoting sexual development in the darkness while stimulating asexual sporulation under illumination. The velvet complex acts as a global regulator for secondary metabolite gene expression. Component of the velB-VosA heterodimeric complex that plays a dual role in activating genes associated with spore maturation and repressing certain development-associated genes. The velB-VosA complex binds DNA through the DNA-binding domain of vosA that recognizes an 11-nucleotide consensus sequence 5'-CTGGCCGCGGC-3' consisting of two motifs in the promoters of key developmental regulatory genes. This chain is Velvet complex subunit B, found in Laccaria bicolor (strain S238N-H82 / ATCC MYA-4686) (Bicoloured deceiver).